The primary structure comprises 145 residues: MYPAHLLLLLAVCVSLLGASAIPPLPLNLIQFTYLIECANKGRRTSFNYADYGCYCGIGGSGTPVDKLDRCCKTHDECYAQAEKKGCYPKLTMYNYYCGEGGPYCNSKTECQRFVCDCDVRAADCFARYPYNNKNYNINTSKRCK.

The first 21 residues, 1–21 (MYPAHLLLLLAVCVSLLGASA), serve as a signal peptide directing secretion. Residues 22 to 27 (IPPLPL) constitute a propeptide that is removed on maturation. 7 disulfides stabilise this stretch: cysteine 38/cysteine 98, cysteine 54/cysteine 144, cysteine 56/cysteine 72, cysteine 71/cysteine 125, cysteine 78/cysteine 118, cysteine 87/cysteine 111, and cysteine 105/cysteine 116. Tyrosine 55, glycine 57, and glycine 59 together coordinate Ca(2+). The active site involves histidine 75. Aspartate 76 is a Ca(2+) binding site. Aspartate 119 is a catalytic residue.

The protein belongs to the phospholipase A2 family. Group I subfamily. D49 sub-subfamily. Ca(2+) serves as cofactor.

The protein localises to the secreted. The catalysed reaction is a 1,2-diacyl-sn-glycero-3-phosphocholine + H2O = a 1-acyl-sn-glycero-3-phosphocholine + a fatty acid + H(+). Its function is as follows. PLA2 catalyzes the calcium-dependent hydrolysis of the 2-acyl groups in 3-sn-phosphoglycerides. This is Basic phospholipase A2 PC17 from Laticauda laticaudata (Blue-ringed sea krait).